The chain runs to 377 residues: MTLDLIKIRRDLHQIPEIGLEEFKTQAYLLERIAEMTEGKDFVEQRTWRTGILVFLHGSAPEKTIGWRTDIDGLPIVEETGLDFKSIHEGRMHACGHDIHMTTALGLLDQMLQVQPKNNMLFLFQPAEENEAGGMLMYEDGAFGDWLPDEFYGLHVRPDFKVGDIATNTNTLFAGTCEVLVTFKGKGGHAAFPHEANDALVAASYFITQVQTIVSRNVDPIQGGVVTFGSFHAGTTNNVIAETAEVYGTIRTLTQEMSLLIQKRVRQIAEGVAASFGMEVDIMLKQGGYLPVENNPALAKELMAFFDASPMVNLIDCLPAMTGEDFGYLLSKVPGVMFWLGIDTPYALHHPKMSPNEEALAFAVSEIGKFLKYKAED.

The active site involves D70. E129 serves as the catalytic Proton acceptor.

This sequence belongs to the peptidase M20A family. N-acetyldiaminopimelate deacetylase subfamily.

It catalyses the reaction N-acetyl-(2S,6S)-2,6-diaminopimelate + H2O = (2S,6S)-2,6-diaminopimelate + acetate. It participates in amino-acid biosynthesis; L-lysine biosynthesis via DAP pathway; LL-2,6-diaminopimelate from (S)-tetrahydrodipicolinate (acetylase route): step 3/3. In terms of biological role, catalyzes the conversion of N-acetyl-diaminopimelate to diaminopimelate and acetate. The protein is N-acetyldiaminopimelate deacetylase of Streptococcus thermophilus (strain ATCC BAA-491 / LMD-9).